The following is an 87-amino-acid chain: Phosphocarrier protein HPr (87 aa).

Residues 1–87 (MEKIFKVTSD…ETMKNEGLGE (87 aa)) enclose the HPr domain. H14 serves as the catalytic Pros-phosphohistidine intermediate; alternate. The residue at position 14 (H14) is a Tele-phosphohistidine; alternate. S45 is modified (phosphoserine; by HPrK/P).

This sequence belongs to the HPr family. Post-translationally, the form phosphorylated at the tele nitrogen (N(epsilon)2), instead of the expected pros nitrogen (N(delta)1), of His-14 is not able to transfer its phosphoryl group to the B.subtilis EIIA-Glc domain. This form may be inactive in PTS-catalyzed sugar transport or target an as yet unknown acceptor molecule in an alternative metabolic process.

The protein resides in the cytoplasm. Phosphorylation on Ser-45 inhibits the phosphoryl transfer from enzyme I to HPr. In terms of biological role, general (non sugar-specific) component of the phosphoenolpyruvate-dependent sugar phosphotransferase system (sugar PTS). This major carbohydrate active-transport system catalyzes the phosphorylation of incoming sugar substrates concomitantly with their translocation across the cell membrane. The phosphoryl group from phosphoenolpyruvate (PEP) is transferred to the phosphoryl carrier protein HPr by enzyme I. Phospho-HPr then transfers it to the PTS EIIA domain. P-Ser-HPr interacts with the catabolite control protein A (CcpA), forming a complex that binds to DNA at the catabolite response elements cre, operator sites preceding a large number of catabolite-regulated genes. Thus, P-Ser-HPr is a corepressor in carbon catabolite repression (CCR), a mechanism that allows bacteria to coordinate and optimize the utilization of available carbon sources. P-Ser-HPr mediates glucose catabolite repression of cry4A toxin expression. The protein is Phosphocarrier protein HPr (ptsH) of Bacillus thuringiensis subsp. israelensis.